The sequence spans 125 residues: Somatostatin-2 (125 aa).

A signal peptide spans 1 to 24; that stretch reads MQCIRCPAILALLALVLCGPSVSS. Residue Gln-25 is modified to Pyrrolidone carboxylic acid. The propeptide occupies 25 to 97; it reads QLDREQSDNQ…ATGGRMNLER (73 aa). The interval 82 to 107 is disordered; that stretch reads AEDASMATGGRMNLERSVDSTNNLPP. A disulfide bond links Cys-114 and Cys-125. The residue at position 120 (Lys-120) is a 5-hydroxylysine.

This sequence belongs to the somatostatin family.

The protein localises to the secreted. In terms of biological role, somatostatin inhibits the release of somatotropin. In Lophius americanus (American angler), this protein is Somatostatin-2 (sst2).